Here is a 188-residue protein sequence, read N- to C-terminus: Adenine phosphoribosyltransferase (188 aa).

This sequence belongs to the purine/pyrimidine phosphoribosyltransferase family. As to quaternary structure, homodimer.

It localises to the cytoplasm. It carries out the reaction AMP + diphosphate = 5-phospho-alpha-D-ribose 1-diphosphate + adenine. Its pathway is purine metabolism; AMP biosynthesis via salvage pathway; AMP from adenine: step 1/1. Its function is as follows. Catalyzes a salvage reaction resulting in the formation of AMP, that is energically less costly than de novo synthesis. In Burkholderia orbicola (strain MC0-3), this protein is Adenine phosphoribosyltransferase.